We begin with the raw amino-acid sequence, 258 residues long: MLSRRIIPCLDVRNGRVVKGVKFHDHIDMGDIVELALRYRAQGADELVFYDIGASPEGRSVDYTWVERVARLIDIPFCVAGGIGDVETARAVLHAGADKISINSPALGRPQLISELADAFGVQCVVVGIDSIREDDGQWRVRRYTGDPSKTQALPMRTLDWVAEAQRLGAGEIVLNCMDNDGVRRGYDIAQLRQVRALCHVPLIASGGAGEMQHFADVFDQADVDGALAASVFHSGAIPIPELKQFLRAQQIEVRDGQ.

Catalysis depends on residues D11 and D130.

It belongs to the HisA/HisF family. In terms of assembly, heterodimer of HisH and HisF.

Its subcellular location is the cytoplasm. It carries out the reaction 5-[(5-phospho-1-deoxy-D-ribulos-1-ylimino)methylamino]-1-(5-phospho-beta-D-ribosyl)imidazole-4-carboxamide + L-glutamine = D-erythro-1-(imidazol-4-yl)glycerol 3-phosphate + 5-amino-1-(5-phospho-beta-D-ribosyl)imidazole-4-carboxamide + L-glutamate + H(+). The protein operates within amino-acid biosynthesis; L-histidine biosynthesis; L-histidine from 5-phospho-alpha-D-ribose 1-diphosphate: step 5/9. IGPS catalyzes the conversion of PRFAR and glutamine to IGP, AICAR and glutamate. The HisF subunit catalyzes the cyclization activity that produces IGP and AICAR from PRFAR using the ammonia provided by the HisH subunit. This is Imidazole glycerol phosphate synthase subunit HisF from Xanthomonas oryzae pv. oryzae (strain MAFF 311018).